A 671-amino-acid polypeptide reads, in one-letter code: Synaptotagmin-like protein 4 (671 aa).

Residues 4 to 122 (LLDLSFLSEE…KATGDWFYDQ (119 aa)) enclose the RabBD domain. An FYVE-type zinc finger spans residues 63 to 105 (CARCQESLGRLSPKTNTCRGCNHLVCRDCRIQESNGTWRCKVC). Residues 199–243 (SESLDSFTADSDSTSRRDSLDKSGLFPEWKKMSAPKSQVEKETQP) form a disordered region. A phosphoserine mark is found at S201, S204, S217, S221, S274, and S289. One can recognise a C2 1 domain in the interval 356-478 (VTGRIAFSLK…KLDKKLDHCL (123 aa)). Residue S488 is modified to Phosphoserine. The 127-residue stretch at 507–633 (PASKTPVGGD…ISNGEVVDWM (127 aa)) folds into the C2 2 domain.

Part of a ternary complex containing STX1A and RAB27A. Can bind both dominant negative and dominant active mutants of RAB27A. Binds STXBP1, RAB3A, RAB8A and RAB27B. Interacts with MYO5A.

The protein localises to the membrane. The protein resides in the cell membrane. It localises to the cytoplasmic vesicle. Its subcellular location is the secretory vesicle membrane. In terms of biological role, modulates exocytosis of dense-core granules and secretion of hormones in the pancreas and the pituitary. Interacts with vesicles containing negatively charged phospholipids in a Ca(2+)-independent manner. In Homo sapiens (Human), this protein is Synaptotagmin-like protein 4 (SYTL4).